Consider the following 491-residue polypeptide: Ketol-acid reductoisomerase (NADP(+)) (491 aa).

The region spanning 15 to 208 (AQLGKCRFMG…GGHRAGVLES (194 aa)) is the KARI N-terminal Rossmann domain. NADP(+)-binding positions include 45-48 (CGAQ), Arg68, Arg76, Ser78, and 108-110 (DKQ). His132 is a catalytic residue. Gly158 lines the NADP(+) pocket. 2 KARI C-terminal knotted domains span residues 209–344 (SFVA…TAPQ) and 345–484 (YEGK…MTDM). Residues Asp217, Glu221, Glu389, and Glu393 each coordinate Mg(2+). Substrate is bound at residue Ser414.

This sequence belongs to the ketol-acid reductoisomerase family. Mg(2+) serves as cofactor.

It catalyses the reaction (2R)-2,3-dihydroxy-3-methylbutanoate + NADP(+) = (2S)-2-acetolactate + NADPH + H(+). The enzyme catalyses (2R,3R)-2,3-dihydroxy-3-methylpentanoate + NADP(+) = (S)-2-ethyl-2-hydroxy-3-oxobutanoate + NADPH + H(+). It participates in amino-acid biosynthesis; L-isoleucine biosynthesis; L-isoleucine from 2-oxobutanoate: step 2/4. The protein operates within amino-acid biosynthesis; L-valine biosynthesis; L-valine from pyruvate: step 2/4. Its function is as follows. Involved in the biosynthesis of branched-chain amino acids (BCAA). Catalyzes an alkyl-migration followed by a ketol-acid reduction of (S)-2-acetolactate (S2AL) to yield (R)-2,3-dihydroxy-isovalerate. In the isomerase reaction, S2AL is rearranged via a Mg-dependent methyl migration to produce 3-hydroxy-3-methyl-2-ketobutyrate (HMKB). In the reductase reaction, this 2-ketoacid undergoes a metal-dependent reduction by NADPH to yield (R)-2,3-dihydroxy-isovalerate. This chain is Ketol-acid reductoisomerase (NADP(+)), found in Escherichia coli (strain ATCC 8739 / DSM 1576 / NBRC 3972 / NCIMB 8545 / WDCM 00012 / Crooks).